Here is a 299-residue protein sequence, read N- to C-terminus: 4-sulfomuconolactone hydrolase (299 aa).

It belongs to the metallo-dependent hydrolases superfamily. Sulfomuconolactone hydrolase family. In terms of assembly, monomer. Zn(2+) is required as a cofactor.

It carries out the reaction 4-sulfomuconolactone + H2O = maleylacetate + sulfite + 2 H(+). Functionally, involved in the degradation of 4-sulfocatechol which is a central intermediate in the degradation of substituted sulfonated benzenes. Catalyzes the hydrolytical desulfonation of 4-sulfomuconolactone to yield maleylacetate. This is 4-sulfomuconolactone hydrolase from Rhizobium radiobacter (Agrobacterium tumefaciens).